Here is a 756-residue protein sequence, read N- to C-terminus: Tubulin glycylase 3B (756 aa).

A disordered region spans residues 104-123 (TPLPRTVTSSPTAPEAQKRQ). The 358-residue stretch at 272–629 (LEERMAFIED…DLPKNPTAAT (358 aa)) folds into the TTL domain. ATP contacts are provided by residues 440–443 (QKYI), lysine 453, and aspartate 455. The disordered stretch occupies residues 709 to 736 (ITKKKKLSASAGSSTAASAQPSTQNLTT). Low complexity predominate over residues 716 to 727 (SASAGSSTAASA).

It is found in the cytoplasm. Its subcellular location is the cytoskeleton. It localises to the nucleus. Functionally, essential glycylase which modifies both tubulin and non-tubulin proteins, generating side chains of glycine on the gamma-carboxyl groups of specific glutamate residues of target proteins. Monoglycylates alpha-tubulin by adding a single glycine chain to generate monoglycine side chains, but is not involved in elongation step to generate polyglycine side chains on alpha-tubulin. Has the ability to both mono- and polyglycylate non-tubulin proteins such as up (Troponin T). Required for early steps of spermatogenesis. The sequence is that of Tubulin glycylase 3B (TTLL3B) from Drosophila melanogaster (Fruit fly).